Reading from the N-terminus, the 693-residue chain is Elongation factor G (693 aa).

The tr-type G domain occupies lysine 8–leucine 282. Residues alanine 17 to threonine 24, aspartate 81 to histidine 85, and asparagine 135 to aspartate 138 each bind GTP.

The protein belongs to the TRAFAC class translation factor GTPase superfamily. Classic translation factor GTPase family. EF-G/EF-2 subfamily.

The protein localises to the cytoplasm. Its function is as follows. Catalyzes the GTP-dependent ribosomal translocation step during translation elongation. During this step, the ribosome changes from the pre-translocational (PRE) to the post-translocational (POST) state as the newly formed A-site-bound peptidyl-tRNA and P-site-bound deacylated tRNA move to the P and E sites, respectively. Catalyzes the coordinated movement of the two tRNA molecules, the mRNA and conformational changes in the ribosome. This chain is Elongation factor G, found in Staphylococcus intermedius.